A 247-amino-acid polypeptide reads, in one-letter code: PF03932 family protein CutC (247 aa).

Belongs to the CutC family.

The protein resides in the cytoplasm. This is PF03932 family protein CutC from Aliivibrio fischeri (strain MJ11) (Vibrio fischeri).